Here is a 95-residue protein sequence, read N- to C-terminus: Co-chaperonin GroES (95 aa).

The protein belongs to the GroES chaperonin family. As to quaternary structure, heptamer of 7 subunits arranged in a ring. Interacts with the chaperonin GroEL.

It localises to the cytoplasm. Functionally, together with the chaperonin GroEL, plays an essential role in assisting protein folding. The GroEL-GroES system forms a nano-cage that allows encapsulation of the non-native substrate proteins and provides a physical environment optimized to promote and accelerate protein folding. GroES binds to the apical surface of the GroEL ring, thereby capping the opening of the GroEL channel. The protein is Co-chaperonin GroES of Jannaschia sp. (strain CCS1).